The sequence spans 94 residues: MPNTRQAKKRMRRDAKRRLRNRYHLSRMRTYIKNFRRMIENGEIDKAKEYINEVISVIYHTAAKGVIHKNEAARRASRVYKLLNKALQQQQAQA.

The protein belongs to the bacterial ribosomal protein bS20 family.

In terms of biological role, binds directly to 16S ribosomal RNA. This Aquifex aeolicus (strain VF5) protein is Small ribosomal subunit protein bS20.